The following is a 264-amino-acid chain: Glutamate racemase (264 aa).

Residues 10–11 (DS) and 42–43 (YG) each bind substrate. Cys73 acts as the Proton donor/acceptor in catalysis. A substrate-binding site is contributed by 74-75 (NT). The Proton donor/acceptor role is filled by Cys183. 184-185 (TH) contacts substrate.

The protein belongs to the aspartate/glutamate racemases family.

The catalysed reaction is L-glutamate = D-glutamate. The protein operates within cell wall biogenesis; peptidoglycan biosynthesis. In terms of biological role, provides the (R)-glutamate required for cell wall biosynthesis. In Streptococcus pyogenes serotype M3 (strain ATCC BAA-595 / MGAS315), this protein is Glutamate racemase.